Reading from the N-terminus, the 245-residue chain is 3-oxoacyl-[acyl-carrier-protein] reductase FabG (245 aa).

Residues 12-15 (GANR) and T38 each bind NADP(+). The Ca(2+) site is built by K51 and G54. NADP(+) contacts are provided by residues 60–61 (DI) and N87. S139 is a binding site for substrate. A Ca(2+)-binding site is contributed by N146. Y152 serves as the catalytic Proton acceptor. Residues 152-156 (YSAAK) and I185 each bind NADP(+). Q234 and V235 together coordinate Ca(2+).

Belongs to the short-chain dehydrogenases/reductases (SDR) family. In terms of assembly, homotetramer.

The catalysed reaction is a (3R)-hydroxyacyl-[ACP] + NADP(+) = a 3-oxoacyl-[ACP] + NADPH + H(+). It functions in the pathway lipid metabolism; fatty acid biosynthesis. Its function is as follows. Catalyzes the NADPH-dependent reduction of beta-ketoacyl-ACP substrates to beta-hydroxyacyl-ACP products, the first reductive step in the elongation cycle of fatty acid biosynthesis. In Buchnera aphidicola subsp. Baizongia pistaciae (strain Bp), this protein is 3-oxoacyl-[acyl-carrier-protein] reductase FabG (fabG).